Consider the following 365-residue polypeptide: Phosphatidylcholine:ceramide cholinephosphotransferase 4 (365 aa).

Residues 1–44 (MISYPFFSLSPPGLVPPPMAVPPVEMYSGSFWNRMRKPLPLRTQ) lie on the Cytoplasmic side of the membrane. The chain crosses the membrane as a helical span at residues 45 to 65 (VIRFTVVFVIVSFILAVALQI). Residues 66–92 (THERMPDPKVTKPLPDLGFELLTKVPG) lie on the Lumenal side of the membrane. A helical membrane pass occupies residues 93–113 (MYVLADCCIGFLNILSVFTAF). The Cytoplasmic portion of the chain corresponds to 114 to 165 (KLYLLHRHCVGSGEPELPCNIPGVSRFFLSVWLCKENCRIELRNIHTIAWIR). Residues 166 to 186 (FITSYALLLLFRSAVIVMTSL) form a helical membrane-spanning segment. Over 187–229 (PAPDDLCQDPPKIENPVKNVILTVLTAGGGSIHCGDLMYSGHT) the chain is Lumenal. The active site involves His228. A helical transmembrane segment spans residues 230 to 250 (VILTLHLMFHWIYGAMVHWSF). Arg251 is a topological domain (cytoplasmic). A helical membrane pass occupies residues 252 to 272 (PVVTVVAIFGYYCIVASRFHY). Residues His271 and Asp275 contribute to the active site. Residues 273 to 275 (TDD) lie on the Lumenal side of the membrane. The chain crosses the membrane as a helical span at residues 276 to 296 (VLVAIYLTIATFIAVGHNADG). Topologically, residues 297 to 365 (APWQLQLFIR…SLMFKCGAYV (69 aa)) are cytoplasmic.

The protein belongs to the sphingomyelin synthase family.

The protein resides in the golgi apparatus membrane. It catalyses the reaction an N-acylsphing-4-enine + a 1,2-diacyl-sn-glycero-3-phosphocholine = a sphingomyelin + a 1,2-diacyl-sn-glycerol. It carries out the reaction an N-acylsphinganine + a 1,2-diacyl-sn-glycero-3-phosphocholine = an N-acylsphinganine-1-phosphocholine + a 1,2-diacyl-sn-glycerol. The catalysed reaction is an N-acylsphing-4-enine + a 1,2-diacyl-sn-glycero-3-phosphoethanolamine = an N-acylsphing-4-enine 1-phosphoethanolamine + a 1,2-diacyl-sn-glycerol. The enzyme catalyses an N-acylsphinganine + a 1,2-diacyl-sn-glycero-3-phosphoethanolamine = an N-acylsphinganine-1-phosphoethanolamine + a 1,2-diacyl-sn-glycerol. It catalyses the reaction a 1,2-diacyl-sn-glycero-3-phospho-(1D-myo-inositol) + an N-acylsphing-4-enine = an N-acylsphing-4-enine-(1D-myo-inositol) + a 1,2-diacyl-sn-glycerol. It carries out the reaction an N-acylsphinganine + a 1,2-diacyl-sn-glycero-3-phospho-(1D-myo-inositol) = an N-acylsphinganine-(1D-myo-inositol) + a 1,2-diacyl-sn-glycerol. Bifunctional sphingomyelin (SM)/ethanolamine phosphorylceramide (EPC) synthase with minimal inositol phosphorylceramide (IPC) synthase activity. Specificity is likely to be defined by residues in the lumenal catalytic domain that interact with the polar head groups of the phospholipid donors. SM is synthesized by both stages of the parasite life cycle, bloodstream forms (BSF) and procyclic forms (PCF), by transferring the phosphoryl headgroup from a 1,2-diacyl-sn-glycero-3-phosphocholine to an N-acylsphing-4-enine (ceramide) or an N-acylsphinganine (dihydroceramide) with release of 1,2-diacyl-sn-glycerol. Also catalyzes the reverse reaction, production of ceramide from sphingomyelin. EPC is synthesized by transferring phosphoethanolamine from a 1,2-diacyl-sn-glycero-3-phosphoethanolamine to ceramide or dihydroceramide by BSF and PCF, while IPC is confined to PCF. The ceramide/dihydroceramide ratios are skewed towards dihydroceramide in PCF parasites and ceramide in BSF parasites, this is likely due to differential expression and/or regulation of dihydroceramide desaturase, the enzyme responsible for converting dihydroceramide to ceramide. The polypeptide is Phosphatidylcholine:ceramide cholinephosphotransferase 4 (Trypanosoma brucei brucei).